Reading from the N-terminus, the 450-residue chain is Tubulin alpha-1 chain (450 aa).

Glutamine 11 contributes to the GTP binding site. Lysine 40 bears the N6-acetyllysine mark. Glutamate 71, serine 140, glycine 144, threonine 145, threonine 179, asparagine 206, and asparagine 228 together coordinate GTP. Glutamate 71 serves as a coordination point for Mg(2+). Glutamate 254 is an active-site residue.

Belongs to the tubulin family. Dimer of alpha and beta chains. A typical microtubule is a hollow water-filled tube with an outer diameter of 25 nm and an inner diameter of 15 nM. Alpha-beta heterodimers associate head-to-tail to form protofilaments running lengthwise along the microtubule wall with the beta-tubulin subunit facing the microtubule plus end conferring a structural polarity. Microtubules usually have 13 protofilaments but different protofilament numbers can be found in some organisms and specialized cells. Interacts with Ote. It depends on Mg(2+) as a cofactor. In terms of processing, undergoes a tyrosination/detyrosination cycle, the cyclic removal and re-addition of a C-terminal tyrosine residue by the enzymes tubulin tyrosine carboxypeptidase (TTCP) and tubulin tyrosine ligase (TTL), respectively. Post-translationally, acetylation of alpha chains at Lys-40 stabilizes microtubules and affects affinity and processivity of microtubule motors. This modification has a role in multiple cellular functions, ranging from cell motility, cell cycle progression or cell differentiation to intracellular trafficking and signaling. During the early stages of oogenesis lky/Alpha-tubulin N-acetyltransferase 2 is the main acetyltransferase responsible for Lys-40 acetylation in germline cells while Atat/alpha-tubulin N-acetyltransferase 1 is the main acetyltransferase responsible for Lys-40 acetylation in somatic cells.

The protein localises to the cytoplasm. It is found in the cytoskeleton. The enzyme catalyses GTP + H2O = GDP + phosphate + H(+). Its function is as follows. Tubulin is the major constituent of microtubules, a cylinder consisting of laterally associated linear protofilaments composed of alpha- and beta-tubulin heterodimers. Microtubules grow by the addition of GTP-tubulin dimers to the microtubule end, where a stabilizing cap forms. Below the cap, tubulin dimers are in GDP-bound state, owing to GTPase activity of alpha-tubulin. The chain is Tubulin alpha-1 chain (alphaTub84B) from Drosophila melanogaster (Fruit fly).